Reading from the N-terminus, the 121-residue chain is Small ribosomal subunit protein uS13 (121 aa).

The tract at residues 97–121 (VRGQRTRTNARTRRGARKTVAGKKK) is disordered. Over residues 100-121 (QRTRTNARTRRGARKTVAGKKK) the composition is skewed to basic residues.

This sequence belongs to the universal ribosomal protein uS13 family. As to quaternary structure, part of the 30S ribosomal subunit. Forms a loose heterodimer with protein S19. Forms two bridges to the 50S subunit in the 70S ribosome.

In terms of biological role, located at the top of the head of the 30S subunit, it contacts several helices of the 16S rRNA. In the 70S ribosome it contacts the 23S rRNA (bridge B1a) and protein L5 of the 50S subunit (bridge B1b), connecting the 2 subunits; these bridges are implicated in subunit movement. Contacts the tRNAs in the A and P-sites. This is Small ribosomal subunit protein uS13 from Prochlorococcus marinus (strain MIT 9313).